Consider the following 855-residue polypeptide: Photoactivated adenylate cyclase subunit beta-like protein 1224-5/9F (855 aa).

Positions 56–149 (LRRLMYLSKG…GRMSGVWHMK (94 aa)) constitute a BLUF 1 domain. The tract at residues 420-444 (RPPIFDDTPKCNPRPRTPGCEGRQR) is disordered. The BLUF 2 domain occupies 471–563 (VPTLTYISHA…RVYPSEWTLT (93 aa)). The segment covering 813 to 827 (RSGEKPLTEPEEAKL) has biased composition (basic and acidic residues). A disordered region spans residues 813–855 (RSGEKPLTEPEEAKLDFSPGRVRHGDSGRRSNSAQGKLSIQVR). A compositionally biased stretch (polar residues) spans 842–855 (RSNSAQGKLSIQVR).

As to quaternary structure, heterotetramer of two alpha and two beta subunits.

Its subcellular location is the cell projection. It localises to the cilium. It is found in the flagellum. The polypeptide is Photoactivated adenylate cyclase subunit beta-like protein 1224-5/9F (Euglena gracilis).